The chain runs to 1312 residues: Retinoblastoma-like protein A (1312 aa).

Disordered stretches follow at residues 1 to 67 (MMAH…NNEN), 168 to 231 (SSSS…KNSS), 336 to 359 (HNYN…NNNN), 536 to 611 (NNNN…IYGT), 987 to 1023 (NNNN…NNNN), 1168 to 1236 (KKND…NNTE), and 1249 to 1312 (EESP…RLKS). Residues 10-67 (TNINTKTTAPTTTTTEQQPEQQQQQPEQQQQEKQNNNNNNNNNNNNNNNINNNENNEN) show a composition bias toward low complexity. A coiled-coil region spans residues 36-117 (EQQQQEKQNN…TSSALNVDQD (82 aa)). Over residues 168–179 (SSSSFQPDNNSK) the composition is skewed to polar residues. The span at 180-189 (IKGRKIRKTN) shows a compositional bias: basic residues. A coiled-coil region spans residues 195 to 230 (NNDSNEEEEETTTDTEEEEEEDTLLNENNNSINKNS). Acidic residues predominate over residues 198–218 (SNEEEEETTTDTEEEEEEDTL). 3 stretches are compositionally biased toward low complexity: residues 219–231 (LNEN…KNSS), 337–359 (NYNN…NNNN), and 536–595 (NNNN…SSSS). 3 stretches are compositionally biased toward low complexity: residues 1185-1234 (NNNN…NNNN), 1251-1275 (SPST…NNNK), and 1286-1305 (SPSS…SSSG).

The protein belongs to the retinoblastoma protein (RB) family.

The protein localises to the nucleus. In terms of biological role, key regulator of entry into cell division. Directly involved in heterochromatin formation by maintaining overall chromatin structure and, in particular, that of constitutive heterochromatin by stabilizing histone methylation. Controls histone H4 'Lys-20' trimethylation. Probably acts as a transcription repressor by recruiting chromatin-modifying enzymes to promoters. Plays a dual role, regulating cell-cycle progression and transcriptional events leading to terminal differentiation. In the absence of a G1 phase, functions in late G2 controlling the expression of both S-phase and mitotic genes. Controls stalk/spore preference by suppressing the DIF response in cells destined for the spore pathway. DIF is a chlorinated hydroxyphenone made by cells of spore pathway that promotes stalk differentiation. The chain is Retinoblastoma-like protein A from Dictyostelium discoideum (Social amoeba).